Reading from the N-terminus, the 339-residue chain is Ribosomal RNA small subunit methyltransferase C (339 aa).

It belongs to the methyltransferase superfamily. RsmC family. Monomer.

It localises to the cytoplasm. It catalyses the reaction guanosine(1207) in 16S rRNA + S-adenosyl-L-methionine = N(2)-methylguanosine(1207) in 16S rRNA + S-adenosyl-L-homocysteine + H(+). Functionally, specifically methylates the guanine in position 1207 of 16S rRNA in the 30S particle. The protein is Ribosomal RNA small subunit methyltransferase C of Photobacterium profundum (strain SS9).